Consider the following 483-residue polypeptide: Proton-coupled amino acid transporter 2 (483 aa).

Residues 1 to 58 lie on the Cytoplasmic side of the membrane; it reads MSVTKSTEGPQGAVAIKLDLMSPPESAKKLENKDSTFLDESPSESAGLKKTKGITVFQ. Residues 26 to 36 are compositionally biased toward basic and acidic residues; the sequence is SAKKLENKDST. A disordered region spans residues 26–46; it reads SAKKLENKDSTFLDESPSESA. The helical transmembrane segment at 59 to 79 threads the bilayer; it reads ALIHLVKGNMGTGILGLPLAV. Residues 80-81 lie on the Extracellular side of the membrane; that stretch reads KN. The chain crosses the membrane as a helical span at residues 82–102; that stretch reads AGILMGPLSLLVMGFIACHCM. Topologically, residues 103–148 are cytoplasmic; it reads HILVKCAQRFCKRLNKPFMDYGDTVMHGLEANPNAWLQNHAHWGRH. Residues 149–169 form a helical membrane-spanning segment; that stretch reads IVSFFLIITQLGFCCVYIVFL. The Extracellular portion of the chain corresponds to 170 to 197; sequence ADNLKQVVEAVNSTTNNCYSNETVILTP. The helical transmembrane segment at 198-218 threads the bilayer; sequence TMDSRLYMLSFLPFLVLLVLI. Residues 219–222 are Cytoplasmic-facing; it reads RNLR. Residues 223–243 form a helical membrane-spanning segment; sequence ILTIFSMLANISMLVSLVIII. At 244–264 the chain is on the extracellular side; the sequence is QYITQEIPDPSRLPLVASWKT. Residues 265 to 285 form a helical membrane-spanning segment; that stretch reads YPLFFGTAIFSFESIGVVLPL. Topologically, residues 286-296 are cytoplasmic; it reads ENKMKNARHFP. A helical transmembrane segment spans residues 297 to 317; that stretch reads AILSLGMSIVTSLYIGMAALG. At 318–349 the chain is on the extracellular side; it reads YLRFGDDIKASISLNLPNCWLYQSVKLLYIAG. The helical transmembrane segment at 350 to 370 threads the bilayer; it reads ILCTYALQFYVPAEIIIPFAI. Residues 371–379 are Cytoplasmic-facing; it reads SRVSTRWAL. A helical transmembrane segment spans residues 380–400; it reads PLDLSIRLVMVCLTCLLAILI. The Extracellular segment spans residues 401–404; sequence PRLD. Residues 405-425 traverse the membrane as a helical segment; it reads LVISLVGSVSGTALALIIPPL. The Cytoplasmic portion of the chain corresponds to 426-437; sequence LEVTTFYSEGMS. The helical transmembrane segment at 438–458 threads the bilayer; that stretch reads PLTIFKDALISILGFVGFVVG. At 459-483 the chain is on the extracellular side; it reads TYQALDELLKSEDSHPFSNSTTFVR.

It belongs to the amino acid/polyamine transporter 2 family. In terms of tissue distribution, abundantly expressed in kidney and muscle. Expressed in the S1 segment of the proximal tubule close to the glomerulus.

The protein localises to the cell membrane. It is found in the endoplasmic reticulum membrane. The protein resides in the recycling endosome membrane. It carries out the reaction glycine(in) + H(+)(in) = glycine(out) + H(+)(out). The catalysed reaction is L-alanine(in) + H(+)(in) = L-alanine(out) + H(+)(out). It catalyses the reaction D-alanine(in) + H(+)(in) = D-alanine(out) + H(+)(out). The enzyme catalyses L-proline(out) + H(+)(out) = L-proline(in) + H(+)(in). It carries out the reaction D-proline(out) + H(+)(out) = D-proline(in) + H(+)(in). The catalysed reaction is 4-hydroxy-L-proline(in) + H(+)(in) = 4-hydroxy-L-proline(out) + H(+)(out). It catalyses the reaction L-serine(in) + H(+)(in) = L-serine(out) + H(+)(out). The enzyme catalyses D-serine(out) + H(+)(out) = D-serine(in) + H(+)(in). It carries out the reaction beta-alanine(in) + H(+)(in) = beta-alanine(out) + H(+)(out). The catalysed reaction is 4-aminobutanoate(in) + H(+)(in) = 4-aminobutanoate(out) + H(+)(out). It catalyses the reaction sarcosine(in) + H(+)(in) = sarcosine(out) + H(+)(out). The enzyme catalyses N,N-dimethylglycine(in) + H(+)(in) = N,N-dimethylglycine(out) + H(+)(out). Its function is as follows. Electrogenic proton/amino acid symporter with a high selectivity for the small side chains amino acids glycine, alanine and proline, where both L- and D-enantiomers are transported. Extension of the backbone length, as in beta-alanine and 4-aminobutanoate or methylation of the amino group, as in sarcosine and N,N-dimethylglycine, are also tolerated but decrease transport efficiency. A free carboxyl group is preferred. This is Proton-coupled amino acid transporter 2 from Homo sapiens (Human).